The chain runs to 260 residues: MAKDDSTVRCFQGLLIFGNVIIGMCSIALMAECIFFVSDQNSLYPLLEATNNDDIYAAAWIGMFVGICLFCLSVLGIVGIMKSNRKILLVYFILMFIVYAFEVASCITAATQRDFFTPNLFLKQMLERYQNNSPPNNDDQWKNNGVTKTWDRLMLQDNCCGVNGPSDWQKYTSAFRTENSDADYPWPRQCCVMNSLKEPLNLDACKLGVPGYYHSQGCYELISGPMNRHAWGVAWFGFAILCWTFWVLLGTMFYWSRIDY.

The Cytoplasmic segment spans residues 2 to 15; the sequence is AKDDSTVRCFQGLL. Residues 16–36 traverse the membrane as a helical segment; that stretch reads IFGNVIIGMCSIALMAECIFF. Residues 37 to 60 lie on the Extracellular side of the membrane; the sequence is VSDQNSLYPLLEATNNDDIYAAAW. The chain crosses the membrane as a helical span at residues 61–81; sequence IGMFVGICLFCLSVLGIVGIM. Residues 82–86 are Cytoplasmic-facing; it reads KSNRK. Residues 87-107 form a helical membrane-spanning segment; that stretch reads ILLVYFILMFIVYAFEVASCI. The Extracellular segment spans residues 108–229; the sequence is TAATQRDFFT…ELISGPMNRH (122 aa). A helical transmembrane segment spans residues 230 to 250; it reads AWGVAWFGFAILCWTFWVLLG. At 251–260 the chain is on the cytoplasmic side; it reads TMFYWSRIDY.

The protein belongs to the tetraspanin (TM4SF) family. Heterodimer with uroplakin-3A (UPK3A) or uroplakin-3B (UPK3B). Post-translationally, N-glycosylated with high-mannose oligosaccharides. As to expression, bladder epithelium.

It is found in the membrane. In terms of biological role, component of the asymmetric unit membrane (AUM); a highly specialized biomembrane elaborated by terminally differentiated urothelial cells. May play an important role in normal bladder epithelial physiology, possibly in regulating membrane permeability of superficial umbrella cells or in stabilizing the apical membrane through AUM/cytoskeletal interactions. This is Uroplakin-1b (UPK1B) from Bos taurus (Bovine).